The chain runs to 120 residues: Secreted RxLR effector protein RXLR-C26 (120 aa).

The signal sequence occupies residues 1 to 29 (MTGILCFPPFARFFMLLSGCAWLAGVSSG). Positions 57–77 (RNLRGHINSAIIEANDTSEER) match the RxLR-dEER motif. Asparagine 71 is a glycosylation site (N-linked (GlcNAc...) asparagine).

The protein belongs to the RxLR effector family.

It localises to the secreted. The protein localises to the host cytoplasm. The protein resides in the host nucleus. Functionally, secreted effector that does not suppress pattern-triggered immunity (PTI) in plant host. In Plasmopara halstedii (Downy mildew of sunflower), this protein is Secreted RxLR effector protein RXLR-C26.